The chain runs to 357 residues: Protein RecA (357 aa).

71-78 (GPESSGKT) is a binding site for ATP.

This sequence belongs to the RecA family.

The protein resides in the cytoplasm. In terms of biological role, can catalyze the hydrolysis of ATP in the presence of single-stranded DNA, the ATP-dependent uptake of single-stranded DNA by duplex DNA, and the ATP-dependent hybridization of homologous single-stranded DNAs. It interacts with LexA causing its activation and leading to its autocatalytic cleavage. The protein is Protein RecA of Ehrlichia chaffeensis (strain ATCC CRL-10679 / Arkansas).